The chain runs to 117 residues: Cell division protein FtsL (117 aa).

The Cytoplasmic portion of the chain corresponds to 1-35 (MSNLAYQPEKQQRHAISPEKKVIVKKRASITLGEK). The chain crosses the membrane as a helical span at residues 36–56 (VLLVLFAAAVLSVSLLIVSKA). Residues 57 to 117 (YAAYQTNIEV…KDKKVKNIQE (61 aa)) are Extracellular-facing.

It belongs to the FtsL family. Monomer. Interacts with DivIB and DivIC. Interaction with DivIC stabilizes FtsL against RasP cleavage. In terms of processing, cleaved by RasP. Cleavage is important for turnover and function of FtsL.

Its subcellular location is the cell membrane. Its function is as follows. Essential cell division protein that may play a structural role. Probably involved in the regulation of the timing of cell division. Also required for sporulation. In Bacillus subtilis (strain 168), this protein is Cell division protein FtsL.